Here is a 737-residue protein sequence, read N- to C-terminus: Exostosin-1c (737 aa).

The Cytoplasmic portion of the chain corresponds to methionine 1 to lysine 6. A helical; Signal-anchor for type II membrane protein transmembrane segment spans residues tyrosine 7–glutamine 27. The Lumenal segment spans residues glutamate 28–valine 737. N-linked (GlcNAc...) asparagine glycans are attached at residues asparagine 194 and asparagine 322. Arginine 432, arginine 540, aspartate 556, glutamate 557, aspartate 558, glutamate 644, aspartate 645, and arginine 692 together coordinate UDP-N-acetyl-alpha-D-glucosamine. Aspartate 558 is a binding site for Mn(2+). A disulfide bond links cysteine 643 and cysteine 695. The active site involves aspartate 645.

Belongs to the glycosyltransferase 47 family. The cofactor is Mn(2+).

The protein resides in the endoplasmic reticulum membrane. The catalysed reaction is 3-O-{[(1-&gt;4)-beta-D-GlcA-(1-&gt;4)-alpha-D-GlcNAc](n)-(1-&gt;4)-beta-D-GlcA-(1-&gt;3)-beta-D-Gal-(1-&gt;3)-beta-D-Gal-(1-&gt;4)-beta-D-Xyl}-L-seryl-[protein] + UDP-N-acetyl-alpha-D-glucosamine = 3-O-{alpha-D-GlcNAc-[(1-&gt;4)-beta-D-GlcA-(1-&gt;4)-alpha-D-GlcNAc](n)-(1-&gt;4)-beta-D-GlcA-(1-&gt;3)-beta-D-Gal-(1-&gt;3)-beta-D-Gal-(1-&gt;4)-beta-D-Xyl}-L-seryl-[protein] + UDP + H(+). It carries out the reaction 3-O-{alpha-D-GlcNAc-[(1-&gt;4)-beta-D-GlcA-(1-&gt;4)-alpha-D-GlcNAc](n)-(1-&gt;4)-beta-D-GlcA-(1-&gt;3)-beta-D-Gal-(1-&gt;3)-beta-D-Gal-(1-&gt;4)-beta-D-Xyl}-L-seryl-[protein] + UDP-alpha-D-glucuronate = 3-O-{[(1-&gt;4)-beta-D-GlcA-(1-&gt;4)-alpha-D-GlcNAc](n+1)-(1-&gt;4)-beta-D-GlcA-(1-&gt;3)-beta-D-Gal-(1-&gt;3)-beta-D-Gal-(1-&gt;4)-beta-D-Xyl}-L-seryl-[protein] + UDP + H(+). It functions in the pathway protein modification; protein glycosylation. Its function is as follows. Glycosyltransferase required for the biosynthesis of heparan-sulfate. The chain is Exostosin-1c (ext1c) from Danio rerio (Zebrafish).